Consider the following 164-residue polypeptide: Endoribonuclease YbeY (164 aa).

Zn(2+) is bound by residues His-130, His-134, and His-140.

This sequence belongs to the endoribonuclease YbeY family. It depends on Zn(2+) as a cofactor.

Its subcellular location is the cytoplasm. Its function is as follows. Single strand-specific metallo-endoribonuclease involved in late-stage 70S ribosome quality control and in maturation of the 3' terminus of the 16S rRNA. The polypeptide is Endoribonuclease YbeY (Streptococcus mutans serotype c (strain ATCC 700610 / UA159)).